We begin with the raw amino-acid sequence, 1161 residues long: Nardilysin (1161 aa).

Residues 1–18 (MLRRVAVAAVFATGRKLR) form the signal peptide. Disordered stretches follow at residues 42–105 (KPFP…KSPS) and 130–218 (VEGK…KKTT). A phosphoserine mark is found at serine 85, serine 91, and serine 93. The segment covering 138–209 (TDEEEEEEEE…EENELEELEE (72 aa)) has biased composition (acidic residues). Position 244 (histidine 244) interacts with Zn(2+). Glutamate 247 (proton acceptor) is an active-site residue. Positions 248 and 325 each coordinate Zn(2+).

It belongs to the peptidase M16 family. Interacts with BACE1 and NRG1. It depends on Zn(2+) as a cofactor. In terms of tissue distribution, testis, and in a lower level in brain, heart and adrenal glands.

Its subcellular location is the mitochondrion. The protein resides in the cell projection. The protein localises to the dendrite. It catalyses the reaction Hydrolysis of polypeptides, preferably at -Xaa-|-Arg-Lys-, and less commonly at -Arg-|-Arg-Xaa-, in which Xaa is not Arg or Lys.. Cleaves peptide substrates on the N-terminus of arginine residues in dibasic pairs. Is a critical activator of BACE1- and ADAM17-mediated pro-neuregulin ectodomain shedding, involved in the positive regulation of axonal maturation and myelination. Required for proper functioning of 2-oxoglutarate dehydrogenase (OGDH). The protein is Nardilysin of Rattus norvegicus (Rat).